The primary structure comprises 530 residues: Arginine--tRNA ligase (530 aa).

The 'HIGH' region motif lies at 113–123; it reads ANPTGPLHIGH.

Belongs to the class-I aminoacyl-tRNA synthetase family. As to quaternary structure, monomer.

It is found in the cytoplasm. It catalyses the reaction tRNA(Arg) + L-arginine + ATP = L-arginyl-tRNA(Arg) + AMP + diphosphate. The polypeptide is Arginine--tRNA ligase (Campylobacter jejuni subsp. jejuni serotype O:2 (strain ATCC 700819 / NCTC 11168)).